The following is a 408-amino-acid chain: Acetate kinase (408 aa).

N10 is a Mg(2+) binding site. Residue K17 participates in ATP binding. Residue R96 participates in substrate binding. D153 acts as the Proton donor/acceptor in catalysis. Residues H213–G217 and D288–R290 each bind ATP. A Mg(2+)-binding site is contributed by E393.

Belongs to the acetokinase family. In terms of assembly, homodimer. It depends on Mg(2+) as a cofactor. Mn(2+) serves as cofactor.

The protein localises to the cytoplasm. It carries out the reaction acetate + ATP = acetyl phosphate + ADP. It functions in the pathway metabolic intermediate biosynthesis; acetyl-CoA biosynthesis; acetyl-CoA from acetate: step 1/2. In terms of biological role, catalyzes the formation of acetyl phosphate from acetate and ATP. Can also catalyze the reverse reaction. The chain is Acetate kinase from Borrelia recurrentis (strain A1).